A 118-amino-acid chain; its full sequence is Non-specific lipid-transfer protein D (118 aa).

Positions 1–25 (MAGLMKLACLIFACMIVAGPITSNA) are cleaved as a signal peptide. 4 cysteine pairs are disulfide-bonded: Cys-29–Cys-77, Cys-39–Cys-54, Cys-55–Cys-100, and Cys-75–Cys-114.

It belongs to the plant LTP family.

Functionally, plant non-specific lipid-transfer proteins transfer phospholipids as well as galactolipids across membranes. May play a role in wax or cutin deposition in the cell walls of expanding epidermal cells and certain secretory tissues. The chain is Non-specific lipid-transfer protein D (WAX9D) from Brassica oleracea var. italica (Broccoli).